The chain runs to 70 residues: Large ribosomal subunit protein uL30 (70 aa).

Belongs to the universal ribosomal protein uL30 family. In terms of assembly, part of the 50S ribosomal subunit.

In Renibacterium salmoninarum (strain ATCC 33209 / DSM 20767 / JCM 11484 / NBRC 15589 / NCIMB 2235), this protein is Large ribosomal subunit protein uL30.